The chain runs to 98 residues: Aspartyl/glutamyl-tRNA(Asn/Gln) amidotransferase subunit C (98 aa).

This sequence belongs to the GatC family. In terms of assembly, heterotrimer of A, B and C subunits.

The enzyme catalyses L-glutamyl-tRNA(Gln) + L-glutamine + ATP + H2O = L-glutaminyl-tRNA(Gln) + L-glutamate + ADP + phosphate + H(+). It catalyses the reaction L-aspartyl-tRNA(Asn) + L-glutamine + ATP + H2O = L-asparaginyl-tRNA(Asn) + L-glutamate + ADP + phosphate + 2 H(+). Allows the formation of correctly charged Asn-tRNA(Asn) or Gln-tRNA(Gln) through the transamidation of misacylated Asp-tRNA(Asn) or Glu-tRNA(Gln) in organisms which lack either or both of asparaginyl-tRNA or glutaminyl-tRNA synthetases. The reaction takes place in the presence of glutamine and ATP through an activated phospho-Asp-tRNA(Asn) or phospho-Glu-tRNA(Gln). This Arthrobacter sp. (strain FB24) protein is Aspartyl/glutamyl-tRNA(Asn/Gln) amidotransferase subunit C.